A 184-amino-acid chain; its full sequence is ATP synthase subunit b, chloroplastic (184 aa).

The chain crosses the membrane as a helical span at residues 27 to 49 (LATNPINLSVVLGVLIFFGKGVL).

The protein belongs to the ATPase B chain family. In terms of assembly, F-type ATPases have 2 components, F(1) - the catalytic core - and F(0) - the membrane proton channel. F(1) has five subunits: alpha(3), beta(3), gamma(1), delta(1), epsilon(1). F(0) has four main subunits: a(1), b(1), b'(1) and c(10-14). The alpha and beta chains form an alternating ring which encloses part of the gamma chain. F(1) is attached to F(0) by a central stalk formed by the gamma and epsilon chains, while a peripheral stalk is formed by the delta, b and b' chains.

The protein localises to the plastid. It is found in the chloroplast thylakoid membrane. Functionally, f(1)F(0) ATP synthase produces ATP from ADP in the presence of a proton or sodium gradient. F-type ATPases consist of two structural domains, F(1) containing the extramembraneous catalytic core and F(0) containing the membrane proton channel, linked together by a central stalk and a peripheral stalk. During catalysis, ATP synthesis in the catalytic domain of F(1) is coupled via a rotary mechanism of the central stalk subunits to proton translocation. Component of the F(0) channel, it forms part of the peripheral stalk, linking F(1) to F(0). The sequence is that of ATP synthase subunit b, chloroplastic from Solanum bulbocastanum (Wild potato).